We begin with the raw amino-acid sequence, 60 residues long: Transcriptional regulatory protein SenN (60 aa).

The H-T-H motif DNA-binding region spans 11–31 (RFRKRKTFGNQILPLELLIEK).

To B.subtilis SenS.

Regulates the expression of extracellular-protein genes of Bacillus natto. This chain is Transcriptional regulatory protein SenN (senN), found in Bacillus subtilis subsp. natto.